The chain runs to 330 residues: ADP-L-glycero-D-manno-heptose-6-epimerase (330 aa).

Residues 11-12, 32-33, Lys-39, Lys-54, 75-79, and Asn-92 each bind NADP(+); these read FI, DN, and EGACS. Catalysis depends on Tyr-139, which acts as the Proton acceptor. Residue Lys-143 coordinates NADP(+). A substrate-binding site is contributed by Asn-168. The NADP(+) site is built by Val-169 and Lys-177. Residue Lys-177 is the Proton acceptor of the active site. Substrate is bound by residues Arg-179, His-186, 200–203, Arg-213, and Tyr-292; that span reads FGEY.

This sequence belongs to the NAD(P)-dependent epimerase/dehydratase family. HldD subfamily. As to quaternary structure, homopentamer. NADP(+) serves as cofactor.

The catalysed reaction is ADP-D-glycero-beta-D-manno-heptose = ADP-L-glycero-beta-D-manno-heptose. It functions in the pathway nucleotide-sugar biosynthesis; ADP-L-glycero-beta-D-manno-heptose biosynthesis; ADP-L-glycero-beta-D-manno-heptose from D-glycero-beta-D-manno-heptose 7-phosphate: step 4/4. Functionally, catalyzes the interconversion between ADP-D-glycero-beta-D-manno-heptose and ADP-L-glycero-beta-D-manno-heptose via an epimerization at carbon 6 of the heptose. The polypeptide is ADP-L-glycero-D-manno-heptose-6-epimerase (Burkholderia vietnamiensis (strain G4 / LMG 22486) (Burkholderia cepacia (strain R1808))).